The following is a 114-amino-acid chain: Ribonuclease P protein component (114 aa).

It belongs to the RnpA family. As to quaternary structure, consists of a catalytic RNA component (M1 or rnpB) and a protein subunit.

It carries out the reaction Endonucleolytic cleavage of RNA, removing 5'-extranucleotides from tRNA precursor.. RNaseP catalyzes the removal of the 5'-leader sequence from pre-tRNA to produce the mature 5'-terminus. It can also cleave other RNA substrates such as 4.5S RNA. The protein component plays an auxiliary but essential role in vivo by binding to the 5'-leader sequence and broadening the substrate specificity of the ribozyme. The chain is Ribonuclease P protein component from Borrelia duttonii (strain Ly).